Consider the following 332-residue polypeptide: HPr kinase/phosphorylase (332 aa).

Active-site residues include histidine 153 and lysine 174. 168-175 (GKSGLGKS) lines the ATP pocket. Residue serine 175 coordinates Mg(2+). The active-site Proton acceptor; for phosphorylation activity. Proton donor; for dephosphorylation activity is the aspartate 192. The important for the catalytic mechanism of both phosphorylation and dephosphorylation stretch occupies residues 217-226 (MEIRGLGVVD). Position 218 (glutamate 218) interacts with Mg(2+). The active site involves arginine 259. An important for the catalytic mechanism of dephosphorylation region spans residues 280–285 (PIFPGK).

This sequence belongs to the HPrK/P family. As to quaternary structure, homohexamer. The cofactor is Mg(2+).

It carries out the reaction [HPr protein]-L-serine + ATP = [HPr protein]-O-phospho-L-serine + ADP + H(+). It catalyses the reaction [HPr protein]-O-phospho-L-serine + phosphate + H(+) = [HPr protein]-L-serine + diphosphate. Its function is as follows. Catalyzes the ATP- as well as the pyrophosphate-dependent phosphorylation of a specific serine residue in HPr, a phosphocarrier protein of the phosphoenolpyruvate-dependent sugar phosphotransferase system (PTS). HprK/P also catalyzes the pyrophosphate-producing, inorganic phosphate-dependent dephosphorylation (phosphorolysis) of seryl-phosphorylated HPr (P-Ser-HPr). This Chlorobium phaeovibrioides (strain DSM 265 / 1930) (Prosthecochloris vibrioformis (strain DSM 265)) protein is HPr kinase/phosphorylase.